The primary structure comprises 358 residues: Peptide chain release factor 1 (358 aa).

Residue Gln-233 is modified to N5-methylglutamine.

Belongs to the prokaryotic/mitochondrial release factor family. Methylated by PrmC. Methylation increases the termination efficiency of RF1.

It localises to the cytoplasm. Its function is as follows. Peptide chain release factor 1 directs the termination of translation in response to the peptide chain termination codons UAG and UAA. In Macrococcus caseolyticus (strain JCSC5402) (Macrococcoides caseolyticum), this protein is Peptide chain release factor 1.